The chain runs to 460 residues: Ammonium transporter Rh type B-A (460 aa).

The Cytoplasmic segment spans residues 1-10 (MTGYSTNMRI). The chain crosses the membrane as a helical span at residues 11 to 31 (KLPLFCLILQFITIILFAVFV). At 32-62 (RYDHESDARGWHDELKNHSTANADNDFYFRY) the chain is on the extracellular side. N-linked (GlcNAc...) asparagine glycosylation occurs at asparagine 48. Residues 63-83 (PSFQDVHVMIFIGFGFLMTFL) traverse the membrane as a helical segment. Over 84 to 87 (KRYG) the chain is Cytoplasmic. Residues 88–108 (FSSVAFNFLIAAFGLQWSTLI) form a helical membrane-spanning segment. Residues 109-125 (QGFFHGFHDGKIHVGIE) are Extracellular-facing. Residues 126–146 (SMINADFCTGAVLISFGAVLG) form a helical membrane-spanning segment. Topologically, residues 147–150 (KTSP) are cytoplasmic. Residues 151 to 171 (VQLIVMTLIEVTLFGINEYII) form a helical membrane-spanning segment. Residues 172–179 (LNIVGAKD) are Extracellular-facing. A helical membrane pass occupies residues 180 to 202 (AGGSMTIHTFGAYFGLIVSRVLY). The Cytoplasmic segment spans residues 203 to 220 (RADLDKSRQREGSVYHSD). A helical transmembrane segment spans residues 221 to 241 (LFAMIGTIYLWMFWPSFNSAV). Topologically, residues 242 to 252 (TAHGDDQHRTV) are extracellular. Residues 253 to 273 (LNTYYSLAACTLATFGFSALL) form a helical membrane-spanning segment. At 274-283 (NGEGKLDMVH) the chain is on the cytoplasmic side. The helical transmembrane segment at 284 to 304 (IQNAALAGGVAVGTSGEMMLT) threads the bilayer. Position 305 (proline 305) is a topological domain, extracellular. The chain crosses the membrane as a helical span at residues 306–326 (FGAMIAGTLAGIVSVLGYKYL). Residues 327–347 (TPVLDSKLKIQDTCGVHNLHG) are Cytoplasmic-facing. A helical membrane pass occupies residues 348–368 (MPGILGAVIGAIVALFATADI). Residues 369 to 394 (YGDGMDDVFPMIFDGSRTAKQQSLYQ) lie on the Extracellular side of the membrane. Residues 395–415 (FLALLVALGFAIVGGTVVGFI) traverse the membrane as a helical segment. The Cytoplasmic portion of the chain corresponds to 416–460 (LKLPLFGTPSDAECFEDAVYWEVPGGEGHQQLTVVVNNEDPDTQA).

This sequence belongs to the ammonium transporter (TC 2.A.49) family. Rh subfamily.

It is found in the basolateral cell membrane. The protein resides in the cytoplasmic vesicle membrane. Functions as a specific ammonium transporter. The chain is Ammonium transporter Rh type B-A (rhbg-a) from Xenopus laevis (African clawed frog).